We begin with the raw amino-acid sequence, 611 residues long: Growth hormone receptor (611 aa).

The signal sequence occupies residues 1 to 20; it reads MDLRHLLLTLVLVCANDSLS. Residue N16 is glycosylated (N-linked (GlcNAc...) asparagine). Over 21-240 the chain is Extracellular; it reads ASDDVLRLPQ…EFVHCAEEIE (220 aa). Cysteines 34 and 44 form a disulfide. An N-linked (GlcNAc...) asparagine glycan is attached at N53. The cysteines at positions 75 and 86 are disulfide-linked. N89 carries an N-linked (GlcNAc...) asparagine glycan. A disulfide bridge links C100 with C114. Positions 125-228 constitute a Fibronectin type-III domain; it reads PPVHLNWTLL…EILYVSFSQA (104 aa). N-linked (GlcNAc...) asparagine glycosylation is found at N130, N135, and N174. The short motif at 214-218 is the WSXWS motif element; sequence FGEFS. Residues 241 to 264 form a helical membrane-spanning segment; sequence FPWFLVVIFGACGLAVTVILILLS. Residues 265–611 are Cytoplasmic-facing; sequence KQSRLKMLIF…STDQLNKIMP (347 aa). The tract at residues 270 to 355 is required for JAK2 binding; sequence KMLIFPPVPV…HLKSHSCLGA (86 aa). Residues 273-281 carry the Box 1 motif motif; that stretch reads IFPPVPVPK. The short motif at 316-325 is the UbE motif element; it reads DLWVEFIELD. The disordered stretch occupies residues 411–455; the sequence is SLPSLANTDTQQPRMSTRPENSQPWPPFADSIDAASPSAHNQLSN. The segment covering 414 to 433 has biased composition (polar residues); the sequence is SLANTDTQQPRMSTRPENSQ.

Belongs to the type I cytokine receptor family. Type 1 subfamily. The soluble form (GHBP) is produced by phorbol ester-promoted proteolytic cleavage at the cell surface (shedding) by ADAM17/TACE.

The protein localises to the cell membrane. The protein resides in the secreted. Functionally, receptor for pituitary gland growth hormone (GH1) involved in regulating postnatal body growth. On ligand binding, couples to the JAK2/STAT5 pathway. In terms of biological role, the soluble form (GHBP) acts as a reservoir of growth hormone in plasma and may be a modulator/inhibitor of GH signaling. The polypeptide is Growth hormone receptor (GHR) (Columba livia (Rock dove)).